The chain runs to 92 residues: UPF0250 protein XAC0666 (92 aa).

The protein belongs to the UPF0250 family.

This is UPF0250 protein XAC0666 from Xanthomonas axonopodis pv. citri (strain 306).